A 498-amino-acid polypeptide reads, in one-letter code: Galactose-1-phosphate uridylyltransferase (498 aa).

This sequence belongs to the galactose-1-phosphate uridylyltransferase type 2 family.

It is found in the cytoplasm. The enzyme catalyses alpha-D-galactose 1-phosphate + UDP-alpha-D-glucose = alpha-D-glucose 1-phosphate + UDP-alpha-D-galactose. The protein operates within carbohydrate metabolism; galactose metabolism. The polypeptide is Galactose-1-phosphate uridylyltransferase (Latilactobacillus sakei subsp. sakei (strain 23K) (Lactobacillus sakei subsp. sakei)).